The chain runs to 494 residues: Aspartyl/glutamyl-tRNA(Asn/Gln) amidotransferase subunit B (494 aa).

Belongs to the GatB/GatE family. GatB subfamily. As to quaternary structure, heterotrimer of A, B and C subunits.

It carries out the reaction L-glutamyl-tRNA(Gln) + L-glutamine + ATP + H2O = L-glutaminyl-tRNA(Gln) + L-glutamate + ADP + phosphate + H(+). The enzyme catalyses L-aspartyl-tRNA(Asn) + L-glutamine + ATP + H2O = L-asparaginyl-tRNA(Asn) + L-glutamate + ADP + phosphate + 2 H(+). Its function is as follows. Allows the formation of correctly charged Asn-tRNA(Asn) or Gln-tRNA(Gln) through the transamidation of misacylated Asp-tRNA(Asn) or Glu-tRNA(Gln) in organisms which lack either or both of asparaginyl-tRNA or glutaminyl-tRNA synthetases. The reaction takes place in the presence of glutamine and ATP through an activated phospho-Asp-tRNA(Asn) or phospho-Glu-tRNA(Gln). The protein is Aspartyl/glutamyl-tRNA(Asn/Gln) amidotransferase subunit B of Rhodopseudomonas palustris (strain BisA53).